The following is a 449-amino-acid chain: UDP-N-acetylmuramoylalanine--D-glutamate ligase (449 aa).

111–117 (GTNGKST) contacts ATP.

This sequence belongs to the MurCDEF family.

It is found in the cytoplasm. The catalysed reaction is UDP-N-acetyl-alpha-D-muramoyl-L-alanine + D-glutamate + ATP = UDP-N-acetyl-alpha-D-muramoyl-L-alanyl-D-glutamate + ADP + phosphate + H(+). The protein operates within cell wall biogenesis; peptidoglycan biosynthesis. Functionally, cell wall formation. Catalyzes the addition of glutamate to the nucleotide precursor UDP-N-acetylmuramoyl-L-alanine (UMA). The sequence is that of UDP-N-acetylmuramoylalanine--D-glutamate ligase from Rickettsia felis (strain ATCC VR-1525 / URRWXCal2) (Rickettsia azadi).